We begin with the raw amino-acid sequence, 288 residues long: MSSIKEVREKIESIRNIQKLSKAMEMIAASKMKKAQRLMLVSQPYTKAIRKVIDHISLGKLEYRHVYLMNREVRSVGYWVISSDRGLAGGLNVNVFRMLLNDISRWNKLNVTIKLAIIGSKAISFFNCIDPNMIVSYVSGIGDVPKMSQLIGLVGTMLQLYCNGQVDRLYLIYNKFINTLSQVPKIIQILPIFSESNNTCVTKHWDYLYEPDSKVLLDTLLNRYIESQVYQGVVENLASEQSARMIAMKTASDNGETIIKDLRVFYNKLRQSKITQELAEIISGSSVI.

This sequence belongs to the ATPase gamma chain family. In terms of assembly, F-type ATPases have 2 components, CF(1) - the catalytic core - and CF(0) - the membrane proton channel. CF(1) has five subunits: alpha(3), beta(3), gamma(1), delta(1), epsilon(1). CF(0) has three main subunits: a, b and c.

It is found in the cell inner membrane. Functionally, produces ATP from ADP in the presence of a proton gradient across the membrane. The gamma chain is believed to be important in regulating ATPase activity and the flow of protons through the CF(0) complex. This chain is ATP synthase gamma chain, found in Blochmanniella floridana.